The chain runs to 317 residues: Melanocyte-stimulating hormone receptor (317 aa).

Residues 1-37 (MSVQGPQRRLLGSVNSTSPAAPRLGLAANQTGPRCLE) lie on the Extracellular side of the membrane. 2 N-linked (GlcNAc...) asparagine glycosylation sites follow: asparagine 15 and asparagine 29. A helical transmembrane segment spans residues 38–63 (VSVPDGLFLSLGLVSVVENVLVVAAI). Residues 64-72 (AKNRNLHSP) lie on the Cytoplasmic side of the membrane. Residues 73–93 (MYYFICCLAVSDLLVSVSSVL) form a helical membrane-spanning segment. The Extracellular segment spans residues 94–118 (ETAVMLLLEAGTLAGRAAVVQQLDD). The helical transmembrane segment at 119–140 (IIDVLVCGAMVSSLCFLGAIAV) threads the bilayer. Residues 141–163 (DRYISIFYALRYHSIVTLPRAWR) lie on the Cytoplasmic side of the membrane. The helical transmembrane segment at 164–183 (AISAIWVASVLSSTLFIAYY) threads the bilayer. Residues 184-191 (DHTAVLLC) are Extracellular-facing. Residues 192 to 211 (LVSFFVAMLVLMAVLYVHML) form a helical membrane-spanning segment. At 212–240 (ARACQHARGIARLHKRQRPVHQGLGLKGA) the chain is on the cytoplasmic side. A helical transmembrane segment spans residues 241–266 (ATLTILLGIFFLCWGPFFLHLSLMVL). The Extracellular segment spans residues 267–279 (CPRHPICGCVFKN). A helical membrane pass occupies residues 280–300 (FNLFLTLIICNSIVDPLIYAF). Residues 301-317 (RSQELRKTLREVLLCSW) are Cytoplasmic-facing. Cysteine 315 is lipidated: S-palmitoyl cysteine.

Belongs to the G-protein coupled receptor 1 family. Interacts with MGRN1, but does not undergo MGRN1-mediated ubiquitination; this interaction competes with GNAS-binding and thus inhibits agonist-induced cAMP production. Interacts with OPN3; the interaction results in a decrease in MC1R-mediated cAMP signaling and ultimately a decrease in melanin production in melanocytes.

It localises to the cell membrane. Its function is as follows. Receptor for MSH (alpha, beta and gamma) and ACTH. The activity of this receptor is mediated by G proteins which activate adenylate cyclase. Mediates melanogenesis, the production of eumelanin (black/brown) and phaeomelanin (red/yellow), via regulation of cAMP signaling in melanocytes. This is Melanocyte-stimulating hormone receptor (MC1R) from Puma yagouaroundi (Jaguarundi).